The following is a 398-amino-acid chain: 1-deoxy-D-xylulose 5-phosphate reductoisomerase (398 aa).

Residues threonine 11, glycine 12, serine 13, isoleucine 14, and asparagine 125 each contribute to the NADPH site. Lysine 126 contacts 1-deoxy-D-xylulose 5-phosphate. Glutamate 127 is an NADPH binding site. Residue aspartate 151 coordinates Mn(2+). 1-deoxy-D-xylulose 5-phosphate is bound by residues serine 152, glutamate 153, serine 186, and histidine 209. Position 153 (glutamate 153) interacts with Mn(2+). Glycine 215 is an NADPH binding site. The 1-deoxy-D-xylulose 5-phosphate site is built by serine 222, asparagine 227, lysine 228, and glutamate 231. Glutamate 231 lines the Mn(2+) pocket.

Belongs to the DXR family. Mg(2+) serves as cofactor. Requires Mn(2+) as cofactor.

It carries out the reaction 2-C-methyl-D-erythritol 4-phosphate + NADP(+) = 1-deoxy-D-xylulose 5-phosphate + NADPH + H(+). Its pathway is isoprenoid biosynthesis; isopentenyl diphosphate biosynthesis via DXP pathway; isopentenyl diphosphate from 1-deoxy-D-xylulose 5-phosphate: step 1/6. Functionally, catalyzes the NADPH-dependent rearrangement and reduction of 1-deoxy-D-xylulose-5-phosphate (DXP) to 2-C-methyl-D-erythritol 4-phosphate (MEP). The protein is 1-deoxy-D-xylulose 5-phosphate reductoisomerase of Acinetobacter baumannii (strain AB307-0294).